The primary structure comprises 219 residues: MKYLLTLLMALSLVNLMLTRPTPEDDGGTSEEPQTQETTGETTGSDEKKGASEEPNADDASKTDDVEEKGDDDTAKKEDDGESKDGEGSEKSDKEKGEPKNDPRETYNKVIEQLDQIKVDNVEDGHERSELAADIQRYLRNPIVDVIGSAGDFSKIAKCFKSMVGDAKKAIEEDVKGFKECTAKKDSNAYQCSQDRSTVQDKIAKMSSKIASCVASNRS.

The N-terminal stretch at 1–19 (MKYLLTLLMALSLVNLMLT) is a signal peptide. The tract at residues 19–109 (TRPTPEDDGG…KNDPRETYNK (91 aa)) is disordered. Residues 30 to 43 (SEEPQTQETTGETT) show a composition bias toward low complexity. The segment covering 72 to 107 (DDTAKKEDDGESKDGEGSEKSDKEKGEPKNDPRETY) has biased composition (basic and acidic residues).

In terms of tissue distribution, salivary gland (at protein level).

Its subcellular location is the secreted. Functionally, induces expression of IL4 in host skin by diverting host CD4 cells away from Th1 and towards Th2 responsiveness. Induces expression of IL10 in host skin. Down-regulates expression of IL12B, IFN-gamma (IFNG) and TNF-alpha (TNF) in host skin. The protein is Salivary IL-4-inducing protein of Aedes aegypti (Yellowfever mosquito).